We begin with the raw amino-acid sequence, 830 residues long: BLOC-2 complex member HPS5 homolog (830 aa).

WD repeat units lie at residues 25 to 64 (RNNS…FLAI), 67 to 106 (SQLG…STDG), and 114 to 153 (GGPA…GRNI). Residues 578 to 604 (DTETIVRLLRKLETLMEENEEPNARLK) are a coiled coil.

This sequence belongs to the HPS5 family.

Has a role in the biogenesis of eye pigment granules. Eye pigment granules are specialized forms of late endosomes or lysosomes. Biogenesis of pigment granules in the eye requires molecular components required for protein delivery to lysosomes. This is BLOC-2 complex member HPS5 homolog from Anopheles gambiae (African malaria mosquito).